Consider the following 137-residue polypeptide: Small ribosomal subunit protein uS12 (137 aa).

The interval 1 to 57 (MPTINQLVRKPRKSKVEKSKSPALNVGYNSHKKVQTNVSSPQKRGVATRVGTMTPKK) is disordered. The residue at position 102 (Asp102) is a 3-methylthioaspartic acid.

Belongs to the universal ribosomal protein uS12 family. As to quaternary structure, part of the 30S ribosomal subunit. Contacts proteins S8 and S17. May interact with IF1 in the 30S initiation complex.

Functionally, with S4 and S5 plays an important role in translational accuracy. In terms of biological role, interacts with and stabilizes bases of the 16S rRNA that are involved in tRNA selection in the A site and with the mRNA backbone. Located at the interface of the 30S and 50S subunits, it traverses the body of the 30S subunit contacting proteins on the other side and probably holding the rRNA structure together. The combined cluster of proteins S8, S12 and S17 appears to hold together the shoulder and platform of the 30S subunit. The protein is Small ribosomal subunit protein uS12 of Streptococcus pneumoniae serotype 2 (strain D39 / NCTC 7466).